Consider the following 182-residue polypeptide: Ribosome-recycling factor (182 aa).

The protein belongs to the RRF family.

It is found in the cytoplasm. Its function is as follows. Responsible for the release of ribosomes from messenger RNA at the termination of protein biosynthesis. May increase the efficiency of translation by recycling ribosomes from one round of translation to another. The protein is Ribosome-recycling factor of Cyanothece sp. (strain PCC 7425 / ATCC 29141).